Consider the following 183-residue polypeptide: Bifunctional protein PyrR (183 aa).

Substrate contacts are provided by residues 46-47 (TR), Arg-87, 107-115 (DDVIFSGRT), Arg-140, and Val-164. A PRPP-binding motif is present at residues 103-115 (VVLVDDVIFSGRT).

The protein belongs to the purine/pyrimidine phosphoribosyltransferase family. PyrR subfamily.

The catalysed reaction is UMP + diphosphate = 5-phospho-alpha-D-ribose 1-diphosphate + uracil. Functionally, regulates the transcription of the pyrimidine nucleotide (pyr) operon in response to exogenous pyrimidines. In terms of biological role, also displays a weak uracil phosphoribosyltransferase activity which is not physiologically significant. The chain is Bifunctional protein PyrR from Thermosynechococcus vestitus (strain NIES-2133 / IAM M-273 / BP-1).